Reading from the N-terminus, the 312-residue chain is MAEFEDQLVFNSISARALKAYFTAKINEMVDELVTRKCPQKKKSQAKKPEVRIPVDLVKSSFVKKFGLCNYGGILISLINSLVENNFFTKDGKLDDTGKKELVLTDVEKRILNTIDKSSPLYIDISDVKVLAARLKRSATQFNFNGHTYHLENDKIEDLINQLVKDESIQLDEKSSIKDSMYVIPDELIDVLKTRLFRSPQVKDNIISRTRLYDYFTRVTKRDESSIYVILKDPRIASILSLETVKMGAFMYTKHSMLTNAISSRVDRYSKKFQESFYEDIAEFVKENERVNVSRVVECLTVPNITISSNAE.

This sequence belongs to the orthopoxvirus OPG077 family.

It localises to the virion. Its function is as follows. DNA-binding protein which binds to the hairpin form of the viral telomeric sequence. Required for the production of mature virions (MV). The polypeptide is Telomere-binding protein OPG077 (OPG077) (Rabbitpox virus (strain Utrecht) (RPV)).